A 276-amino-acid chain; its full sequence is Light-independent protochlorophyllide reductase iron-sulfur ATP-binding protein (276 aa).

Residues 12 to 17 (GIGKST) and lysine 41 contribute to the ATP site. Serine 16 contributes to the Mg(2+) binding site. [4Fe-4S] cluster contacts are provided by cysteine 97 and cysteine 131. An ATP-binding site is contributed by 182–183 (NR).

Belongs to the NifH/BchL/ChlL family. Homodimer. Protochlorophyllide reductase is composed of three subunits; BchL, BchN and BchB. [4Fe-4S] cluster is required as a cofactor.

The catalysed reaction is chlorophyllide a + oxidized 2[4Fe-4S]-[ferredoxin] + 2 ADP + 2 phosphate = protochlorophyllide a + reduced 2[4Fe-4S]-[ferredoxin] + 2 ATP + 2 H2O. Its pathway is porphyrin-containing compound metabolism; bacteriochlorophyll biosynthesis (light-independent). Its function is as follows. Component of the dark-operative protochlorophyllide reductase (DPOR) that uses Mg-ATP and reduced ferredoxin to reduce ring D of protochlorophyllide (Pchlide) to form chlorophyllide a (Chlide). This reaction is light-independent. The L component serves as a unique electron donor to the NB-component of the complex, and binds Mg-ATP. The polypeptide is Light-independent protochlorophyllide reductase iron-sulfur ATP-binding protein (Chlorobaculum tepidum (strain ATCC 49652 / DSM 12025 / NBRC 103806 / TLS) (Chlorobium tepidum)).